We begin with the raw amino-acid sequence, 97 residues long: Large ribosomal subunit protein uL23 (97 aa).

This sequence belongs to the universal ribosomal protein uL23 family. In terms of assembly, part of the 50S ribosomal subunit. Contacts protein L29, and trigger factor when it is bound to the ribosome.

Its function is as follows. One of the early assembly proteins it binds 23S rRNA. One of the proteins that surrounds the polypeptide exit tunnel on the outside of the ribosome. Forms the main docking site for trigger factor binding to the ribosome. In Brucella abortus (strain S19), this protein is Large ribosomal subunit protein uL23.